A 259-amino-acid chain; its full sequence is Thiazole synthase (259 aa).

K95 acts as the Schiff-base intermediate with DXP in catalysis. Residues G156, 182–183 (AG), and 204–205 (AS) contribute to the 1-deoxy-D-xylulose 5-phosphate site.

This sequence belongs to the ThiG family. Homotetramer. Forms heterodimers with either ThiH or ThiS.

The protein resides in the cytoplasm. It carries out the reaction [ThiS sulfur-carrier protein]-C-terminal-Gly-aminoethanethioate + 2-iminoacetate + 1-deoxy-D-xylulose 5-phosphate = [ThiS sulfur-carrier protein]-C-terminal Gly-Gly + 2-[(2R,5Z)-2-carboxy-4-methylthiazol-5(2H)-ylidene]ethyl phosphate + 2 H2O + H(+). The protein operates within cofactor biosynthesis; thiamine diphosphate biosynthesis. Its function is as follows. Catalyzes the rearrangement of 1-deoxy-D-xylulose 5-phosphate (DXP) to produce the thiazole phosphate moiety of thiamine. Sulfur is provided by the thiocarboxylate moiety of the carrier protein ThiS. In vitro, sulfur can be provided by H(2)S. The polypeptide is Thiazole synthase (Corynebacterium aurimucosum (strain ATCC 700975 / DSM 44827 / CIP 107346 / CN-1) (Corynebacterium nigricans)).